The primary structure comprises 497 residues: Acetyl-coenzyme A carboxylase carboxyl transferase subunit beta (497 aa).

The region spanning 217–489 (LWLQCDNCYG…NQNSNQYSQY (273 aa)) is the CoA carboxyltransferase N-terminal domain. Residues Cys-221, Cys-224, Cys-240, and Cys-243 each contribute to the Zn(2+) site. A C4-type zinc finger spans residues 221-243 (CDNCYGLNYKKVLKSKMTICEQC).

This sequence belongs to the AccD/PCCB family. Acetyl-CoA carboxylase is a heterohexamer composed of biotin carboxyl carrier protein, biotin carboxylase and 2 subunits each of ACCase subunit alpha and ACCase plastid-coded subunit beta (accD). The cofactor is Zn(2+).

It is found in the plastid. The enzyme catalyses N(6)-carboxybiotinyl-L-lysyl-[protein] + acetyl-CoA = N(6)-biotinyl-L-lysyl-[protein] + malonyl-CoA. It participates in lipid metabolism; malonyl-CoA biosynthesis; malonyl-CoA from acetyl-CoA: step 1/1. Functionally, component of the acetyl coenzyme A carboxylase (ACC) complex. Biotin carboxylase (BC) catalyzes the carboxylation of biotin on its carrier protein (BCCP) and then the CO(2) group is transferred by the transcarboxylase to acetyl-CoA to form malonyl-CoA. The chain is Acetyl-coenzyme A carboxylase carboxyl transferase subunit beta from Cuscuta reflexa (Southern Asian dodder).